A 1228-amino-acid polypeptide reads, in one-letter code: P3N-PIPO polyprotein (1228 aa).

A Peptidase S30 domain is found at 408 to 547; the sequence is IVGNSKINYI…RSVYAKMDQY (140 aa). Residues His-456, Asp-465, and Ser-499 each act as for P1 proteinase activity in the active site. The Involved in interaction with stylet and aphid transmission motif lies at 598 to 601; sequence KITC. Residues 856–858 carry the Involved in virions binding and aphid transmission motif; that stretch reads PTK. A Peptidase C6 domain is found at 882–1004; sequence MYIAKKGYCY…DSEMKHYIVG (123 aa). Residues Cys-890 and His-963 each act as for helper component proteinase activity in the active site.

This sequence belongs to the potyviridae P3N-PIPO polyprotein family. Interacts (via PIPO domain) with host PCaP1 protein; this interaction may help to anchor the movement complex to the plasma membrane from which the complex could move to the plasmodesmata. In terms of processing, potyviral RNA is expressed as two polyproteins which undergo post-translational proteolytic processing. Genome polyprotein is processed by NIa-pro, P1 and HC-pro proteinases resulting in the production of at least ten individual proteins. P3N-PIPO is cleaved by P1 and HC-pro proteinases resulting in the production of three individual proteins. The P1 proteinase and the HC-pro cleave only their respective C-termini autocatalytically.

The protein localises to the host cell junction. The protein resides in the host plasmodesma. It carries out the reaction Hydrolyzes a Gly-|-Gly bond at its own C-terminus, commonly in the sequence -Tyr-Xaa-Val-Gly-|-Gly, in the processing of the potyviral polyprotein.. Its function is as follows. Required for aphid transmission and also has proteolytic activity. Only cleaves a Gly-Gly dipeptide at its own C-terminus. Interacts with virions and aphid stylets. Acts as a suppressor of RNA-mediated gene silencing, also known as post-transcriptional gene silencing (PTGS), a mechanism of plant viral defense that limits the accumulation of viral RNAs. May have RNA-binding activity. Allows efficient cell to cell propagation, by bypassing the host cell wall barrier. Transports viral genome to neighboring plant cells directly through plasmosdesmata, without any budding. The polypeptide is P3N-PIPO polyprotein (Carica papaya (Papaya)).